A 244-amino-acid chain; its full sequence is Uridylate kinase (244 aa).

ATP is bound at residue 17-20; the sequence is KVSG. The segment at 25-30 is involved in allosteric activation by GTP; it reads GEKGFG. Gly-59 contacts UMP. ATP-binding residues include Gly-60 and Arg-64. UMP is bound by residues Asp-80 and 141-148; that span reads VGNPFFTT. 4 residues coordinate ATP: Thr-168, Gln-169, Tyr-174, and Asp-177.

Belongs to the UMP kinase family. Homohexamer.

Its subcellular location is the cytoplasm. It catalyses the reaction UMP + ATP = UDP + ADP. The protein operates within pyrimidine metabolism; CTP biosynthesis via de novo pathway; UDP from UMP (UMPK route): step 1/1. With respect to regulation, allosterically activated by GTP. Inhibited by UTP. In terms of biological role, catalyzes the reversible phosphorylation of UMP to UDP. This Ehrlichia canis (strain Jake) protein is Uridylate kinase.